The primary structure comprises 358 residues: S-adenosylmethionine:tRNA ribosyltransferase-isomerase (358 aa).

Belongs to the QueA family. Monomer.

The protein localises to the cytoplasm. It catalyses the reaction 7-aminomethyl-7-carbaguanosine(34) in tRNA + S-adenosyl-L-methionine = epoxyqueuosine(34) in tRNA + adenine + L-methionine + 2 H(+). It functions in the pathway tRNA modification; tRNA-queuosine biosynthesis. Transfers and isomerizes the ribose moiety from AdoMet to the 7-aminomethyl group of 7-deazaguanine (preQ1-tRNA) to give epoxyqueuosine (oQ-tRNA). The polypeptide is S-adenosylmethionine:tRNA ribosyltransferase-isomerase (Chelativorans sp. (strain BNC1)).